The following is a 608-amino-acid chain: Putative multicopper oxidase GMC1 (608 aa).

3 consecutive Plastocyanin-like domains span residues 51-163 (INGY…LIVE), 243-374 (LING…ELYR), and 421-548 (ERTF…FEVP). Positions 100, 102, 145, and 147 each coordinate Cu cation. 7 residues coordinate Cu cation: H452, H455, H457, H530, C531, H532, and H536.

This sequence belongs to the multicopper oxidase family. Requires Cu cation as cofactor.

Could be an iron transport multicopper oxidase, which is required for Fe(2+) high affinity uptake. May be required to oxidize Fe(2+) and release it from the transporter. Essential component of copper-dependent iron transport. Involved in meiotic prophase and synaptonemal complex (SC) assembly. In Saccharomyces cerevisiae (strain ATCC 204508 / S288c) (Baker's yeast), this protein is Putative multicopper oxidase GMC1 (GMC1).